An 854-amino-acid chain; its full sequence is Protein translocase subunit SecA (854 aa).

ATP is bound by residues Q89, 107–111 (GEGKT), and D501.

The protein belongs to the SecA family. In terms of assembly, monomer and homodimer. Part of the essential Sec protein translocation apparatus which comprises SecA, SecYEG and auxiliary proteins SecDF-YajC and YidC.

It localises to the cell inner membrane. Its subcellular location is the cytoplasm. It carries out the reaction ATP + H2O + cellular proteinSide 1 = ADP + phosphate + cellular proteinSide 2.. Part of the Sec protein translocase complex. Interacts with the SecYEG preprotein conducting channel. Has a central role in coupling the hydrolysis of ATP to the transfer of proteins into and across the cell membrane, serving both as a receptor for the preprotein-SecB complex and as an ATP-driven molecular motor driving the stepwise translocation of polypeptide chains across the membrane. The sequence is that of Protein translocase subunit SecA from Pelagibacter ubique (strain HTCC1062).